Here is a 98-residue protein sequence, read N- to C-terminus: NADH-ubiquinone oxidoreductase chain 4L (98 aa).

The next 3 helical transmembrane spans lie at 1-21, 30-50, and 61-81; these read MSMV…GLLI, LLCL…TILT, and IILL…LVMI.

The protein belongs to the complex I subunit 4L family. Core subunit of respiratory chain NADH dehydrogenase (Complex I) which is composed of 45 different subunits.

It is found in the mitochondrion inner membrane. The catalysed reaction is a ubiquinone + NADH + 5 H(+)(in) = a ubiquinol + NAD(+) + 4 H(+)(out). In terms of biological role, core subunit of the mitochondrial membrane respiratory chain NADH dehydrogenase (Complex I) which catalyzes electron transfer from NADH through the respiratory chain, using ubiquinone as an electron acceptor. Part of the enzyme membrane arm which is embedded in the lipid bilayer and involved in proton translocation. This is NADH-ubiquinone oxidoreductase chain 4L (MT-ND4L) from Gulo gulo (Wolverine).